A 206-amino-acid chain; its full sequence is Octanoyltransferase (206 aa).

The BPL/LPL catalytic domain maps to 30–206 (PETNDEIWLV…EFVTLLNNSI (177 aa)). Residues 69–76 (RGGQVTYH), 137–139 (SLG), and 150–152 (GIA) each bind substrate. The active-site Acyl-thioester intermediate is Cys168.

The protein belongs to the LipB family.

It is found in the cytoplasm. It catalyses the reaction octanoyl-[ACP] + L-lysyl-[protein] = N(6)-octanoyl-L-lysyl-[protein] + holo-[ACP] + H(+). It functions in the pathway protein modification; protein lipoylation via endogenous pathway; protein N(6)-(lipoyl)lysine from octanoyl-[acyl-carrier-protein]: step 1/2. Functionally, catalyzes the transfer of endogenously produced octanoic acid from octanoyl-acyl-carrier-protein onto the lipoyl domains of lipoate-dependent enzymes. Lipoyl-ACP can also act as a substrate although octanoyl-ACP is likely to be the physiological substrate. In Francisella tularensis subsp. mediasiatica (strain FSC147), this protein is Octanoyltransferase.